Consider the following 323-residue polypeptide: tRNA U34 carboxymethyltransferase (323 aa).

Carboxy-S-adenosyl-L-methionine-binding positions include lysine 91, tryptophan 105, lysine 110, glycine 130, 152-154, 181-182, methionine 196, tyrosine 200, and arginine 315; these read DPT and IE.

It belongs to the class I-like SAM-binding methyltransferase superfamily. CmoB family. Homotetramer.

It catalyses the reaction carboxy-S-adenosyl-L-methionine + 5-hydroxyuridine(34) in tRNA = 5-carboxymethoxyuridine(34) in tRNA + S-adenosyl-L-homocysteine + H(+). In terms of biological role, catalyzes carboxymethyl transfer from carboxy-S-adenosyl-L-methionine (Cx-SAM) to 5-hydroxyuridine (ho5U) to form 5-carboxymethoxyuridine (cmo5U) at position 34 in tRNAs. The chain is tRNA U34 carboxymethyltransferase from Salmonella typhimurium (strain LT2 / SGSC1412 / ATCC 700720).